The primary structure comprises 630 residues: MDLSLLRSLTGPHDLKSLSPEQVRALAQEVRQEILRVVSANGGHLASNLGVVELTIALHRVFSCPHDVVVWDVGHQCYAHKLLTGRAGRFHTLRQKDGISGFPRRDESPYDAFGTGHSSTALSAASGILSALRYRGKSGKVVAVVGDGALTAGLAFEALLNVGRSCSDLIVILNDNKMSISPNTGSFSRYLSTLTVKGPYQKLKTRLRRALQTVPLVGRPACRALSRLKRSARTLLYQSNIFADFGFEYVGPLNGHHIEDLERVLNDAKKLTRPTLLHVQTVKGKGYPFAEQNPTDFHGVGPFNLAEGIVEKKDALTFTEAFSHTLLNAARTDDRVVAITAAMTGGTGLGLFSHIYPERFFDVGIAEQHAVTFAAGLACAGVKPVVAVYSTFLQRAVDQVIHDVAVQNLPVIFALDRAGAVPHDGETHQGLFDLSILRAVPNINILCPASAHELSLLFGWALAQDTPVAIRYPKALCPPEEDGFSTPVHTGRGVLITRENECNVLLVCTGGVFPEVTAAANTLARKGIFADIYNVRFVKPVDEDYFLDLVGRYRSVLFVEDGVKIGGIAEALQALLNTRHPAPCSDVLAFQDMFYPHGSRAQVLAAAGLSAPHIAARAEWLLAHSVGQIR.

Thiamine diphosphate-binding positions include histidine 75 and 116-118 (GHS). Aspartate 147 provides a ligand contact to Mg(2+). Thiamine diphosphate-binding positions include 148–149 (GA), asparagine 176, tyrosine 287, and glutamate 367. Asparagine 176 provides a ligand contact to Mg(2+).

Belongs to the transketolase family. DXPS subfamily. In terms of assembly, homodimer. Mg(2+) serves as cofactor. Requires thiamine diphosphate as cofactor.

The enzyme catalyses D-glyceraldehyde 3-phosphate + pyruvate + H(+) = 1-deoxy-D-xylulose 5-phosphate + CO2. The protein operates within metabolic intermediate biosynthesis; 1-deoxy-D-xylulose 5-phosphate biosynthesis; 1-deoxy-D-xylulose 5-phosphate from D-glyceraldehyde 3-phosphate and pyruvate: step 1/1. Catalyzes the acyloin condensation reaction between C atoms 2 and 3 of pyruvate and glyceraldehyde 3-phosphate to yield 1-deoxy-D-xylulose-5-phosphate (DXP). This is 1-deoxy-D-xylulose-5-phosphate synthase from Treponema pallidum (strain Nichols).